The chain runs to 246 residues: NLP effector protein Pc118548 (246 aa).

An N-terminal signal peptide occupies residues 1–19 (MNFRAFLLAAIAGIATINA). A Hepta-peptide GHRHDWE motif motif is present at residues 122–128 (GHRHYWE). N141 is a glycosylation site (N-linked (GlcNAc...) asparagine).

It belongs to the Necrosis inducing protein (NPP1) family.

It is found in the secreted. Secreted effector that contributes strongly to virulence during infection by P.capsici. Induces cell death in the Solanaceae, including Nicotiana benthamiana and hot pepper. The sequence is that of NLP effector protein Pc118548 from Phytophthora capsici.